The chain runs to 244 residues: MTKKTDALYAAPLHDIIDFQFDERVVAVFPDMIQRSVPGYGMIIANIGVIAARYAQPGSHCYDLGCSLGAATLAMRQRITAPDCDIIAVDNSPAMIERARELLSLDTGLYIPVTLLCSDLQEVTIENASVVVLNFTLQFIPPPQRLALMQRIYAGLNPGGILILSEKIAFSKPEQQQLHIELHHDFKRANGYSDLEISQKRSALENVMIPETVAVHQKRLQTAGFSCAELWFQCFNFASLVAIK.

Residues tyrosine 40, 65–67 (GCS), 90–91 (DN), 119–120 (DL), asparagine 134, and arginine 201 each bind S-adenosyl-L-methionine.

The protein belongs to the class I-like SAM-binding methyltransferase superfamily. Cx-SAM synthase family. In terms of assembly, homodimer.

It carries out the reaction prephenate + S-adenosyl-L-methionine = carboxy-S-adenosyl-L-methionine + 3-phenylpyruvate + H2O. Its function is as follows. Catalyzes the conversion of S-adenosyl-L-methionine (SAM) to carboxy-S-adenosyl-L-methionine (Cx-SAM). In Trichlorobacter lovleyi (strain ATCC BAA-1151 / DSM 17278 / SZ) (Geobacter lovleyi), this protein is Carboxy-S-adenosyl-L-methionine synthase.